The following is a 376-amino-acid chain: Putative F-box protein At1g53370 (376 aa).

One can recognise an F-box domain in the interval 22–71 (RNYIDSIPVDLLIDILSRFPPKSIARFYCVSKLWESILRGPDFTELYLTK).

The sequence is that of Putative F-box protein At1g53370 from Arabidopsis thaliana (Mouse-ear cress).